A 483-amino-acid chain; its full sequence is Glutamyl-tRNA(Gln) amidotransferase subunit A (483 aa).

Active-site charge relay system residues include Lys76 and Ser151. Ser175 functions as the Acyl-ester intermediate in the catalytic mechanism.

This sequence belongs to the amidase family. GatA subfamily. As to quaternary structure, heterotrimer of A, B and C subunits.

It carries out the reaction L-glutamyl-tRNA(Gln) + L-glutamine + ATP + H2O = L-glutaminyl-tRNA(Gln) + L-glutamate + ADP + phosphate + H(+). Functionally, allows the formation of correctly charged Gln-tRNA(Gln) through the transamidation of misacylated Glu-tRNA(Gln) in organisms which lack glutaminyl-tRNA synthetase. The reaction takes place in the presence of glutamine and ATP through an activated gamma-phospho-Glu-tRNA(Gln). This chain is Glutamyl-tRNA(Gln) amidotransferase subunit A, found in Coxiella burnetii (strain CbuK_Q154) (Coxiella burnetii (strain Q154)).